Consider the following 288-residue polypeptide: Acetyl-coenzyme A carboxylase carboxyl transferase subunit beta (288 aa).

The region spanning 32–288 (LFAKCPACKH…LELHTEVENV (257 aa)) is the CoA carboxyltransferase N-terminal domain. Residues Cys36, Cys39, Cys54, and Cys57 each coordinate Zn(2+). The C4-type zinc finger occupies 36 to 57 (CPACKHTIYQKDLGKNKVCPNC).

This sequence belongs to the AccD/PCCB family. In terms of assembly, acetyl-CoA carboxylase is a heterohexamer composed of biotin carboxyl carrier protein (AccB), biotin carboxylase (AccC) and two subunits each of ACCase subunit alpha (AccA) and ACCase subunit beta (AccD). Zn(2+) is required as a cofactor.

The protein localises to the cytoplasm. The enzyme catalyses N(6)-carboxybiotinyl-L-lysyl-[protein] + acetyl-CoA = N(6)-biotinyl-L-lysyl-[protein] + malonyl-CoA. It participates in lipid metabolism; malonyl-CoA biosynthesis; malonyl-CoA from acetyl-CoA: step 1/1. Functionally, component of the acetyl coenzyme A carboxylase (ACC) complex. Biotin carboxylase (BC) catalyzes the carboxylation of biotin on its carrier protein (BCCP) and then the CO(2) group is transferred by the transcarboxylase to acetyl-CoA to form malonyl-CoA. The chain is Acetyl-coenzyme A carboxylase carboxyl transferase subunit beta from Lactococcus lactis subsp. cremoris (strain MG1363).